The primary structure comprises 437 residues: CMP-5'-(3-aminopropyl)phosphonate hydroxylase (437 aa).

FAD is required as a cofactor.

The enzyme catalyses CMP-5'-(3-aminopropyl)phosphonate + NADPH + O2 = CMP-5'-(N-hydroxy-3-aminopropyl)phosphonate + NADP(+) + H2O. It functions in the pathway antibiotic biosynthesis. In terms of biological role, hydroxylase involved in the biosynthesis of the phosphonate antibiotic FR-900098, a potent antimalarial agent that acts as an inhibitor of 1-deoxy-D-xylulose 5-phosphate reductoisomerase (DXR), the first enzyme in the nonmevalonate pathway for isoprenoid biosynthesis. Catalyzes the N-hydroxylation of CMP-5'-3-aminopropylphosphonate (CMP-5'-3APn) to CMP-5'-(N-hydroxy-3-aminopropyl)phosphonate (CMP-5'-H3APn). Cannot use CMP-5'-N-acetyl-3-aminopropylphosphonate (CMP-5'-Ac3APn) as a substrate. The polypeptide is CMP-5'-(3-aminopropyl)phosphonate hydroxylase (Streptomyces rubellomurinus (strain ATCC 31215)).